We begin with the raw amino-acid sequence, 278 residues long: Large ribosomal subunit protein uL2 (278 aa).

The interval 226–278 (NPIDHPHGGGEGRTSGGRHPVTPWGKPTKGKKTRSNKSTDKFILISRHKRKKK) is disordered.

The protein belongs to the universal ribosomal protein uL2 family. As to quaternary structure, part of the 50S ribosomal subunit. Forms a bridge to the 30S subunit in the 70S ribosome.

One of the primary rRNA binding proteins. Required for association of the 30S and 50S subunits to form the 70S ribosome, for tRNA binding and peptide bond formation. It has been suggested to have peptidyltransferase activity; this is somewhat controversial. Makes several contacts with the 16S rRNA in the 70S ribosome. This Rhodopseudomonas palustris (strain HaA2) protein is Large ribosomal subunit protein uL2.